The chain runs to 96 residues: MFIFNVLTIRCTFHVLFAICYFCDHLLQYISNSRDSKAGLKIFLVFELAVTIFNTVMLQLANRVKNGLTLAILIVSVVMFVYHQQLIVNCKKMLAL.

Transmembrane regions (helical) follow at residues 2 to 22 (FIFNVLTIRCTFHVLFAICYF), 38 to 58 (AGLKIFLVFELAVTIFNTVML), and 68 to 88 (LTLAILIVSVVMFVYHQQLIV).

Its subcellular location is the membrane. This is an uncharacterized protein from Schizosaccharomyces pombe (strain 972 / ATCC 24843) (Fission yeast).